The chain runs to 630 residues: Sodium-dependent serotonin transporter (630 aa).

Polar residues-rich tracts occupy residues 1–11 (METTPLNSQKV) and 42–55 (QISN…STSA). The disordered stretch occupies residues 1 to 63 (METTPLNSQK…SAGDEAPHST (63 aa)). Residues 1 to 87 (METTPLNSQK…ERETWGKKMD (87 aa)) are Cytoplasmic-facing. Phosphotyrosine is present on Y47. A helical membrane pass occupies residues 88–112 (FLLSVIGYAVDLGNIWRFPYICYQN). Na(+)-binding residues include G94, A96, V97, D98, and N101. D98 serves as a coordination point for serotonin. Topologically, residues 113-115 (GGG) are extracellular. Residues 116–135 (AFLLPYTIMAIFGGIPLFYM) traverse the membrane as a helical segment. The Cytoplasmic segment spans residues 136–160 (ELALGQYHRNGCISIWKKICPIFKG). Y142 is modified (phosphotyrosine). A helical transmembrane segment spans residues 161–186 (IGYAICIIAFYIASYYNTIIAWALYY). Over 187–252 (LISSFTDQLP…KGLQDLGTIS (66 aa)) the chain is Extracellular. C200 and C209 are oxidised to a cystine. 2 N-linked (GlcNAc...) asparagine glycosylation sites follow: N208 and N217. Residues 253–271 (WQLALCIMLIFTIIYFSIW) form a helical membrane-spanning segment. The Cytoplasmic portion of the chain corresponds to 272 to 277 (KGVKTS). At T276 the chain carries Phosphothreonine. Residues 278–297 (GKVVWVTATFPYIVLSVLLV) traverse the membrane as a helical segment. The Extracellular portion of the chain corresponds to 298 to 324 (RGATLPGAWRGVVFYLKPNWQKLLETG). The helical transmembrane segment at 325-347 (VWVDAAAQIFFSLGPGFGVLLAF) threads the bilayer. S336 is a binding site for Na(+). The Cytoplasmic portion of the chain corresponds to 348 to 360 (ASYNKFNNNCYQD). Residues 361–380 (ALVTSVVNCMTSFVSGFVIF) traverse the membrane as a helical segment. Na(+) is bound at residue N368. The Extracellular portion of the chain corresponds to 381-421 (TVLGYMAEMRNEDVSEVAKDAGPSLLFITYAEAIANMPAST). Residues 422-443 (FFAIIFFLMLITLGLDSTFAGL) form a helical membrane-spanning segment. L434, D437, and S438 together coordinate Na(+). T439 contributes to the serotonin binding site. Residues 444–463 (EGVITAVLDEFPHIWAKRRE) are Cytoplasmic-facing. A helical membrane pass occupies residues 464-483 (WFVLIVVITCILGSLLTLTS). Residues 484–494 (GGAYVVTLLEE) are Extracellular-facing. Residues E494 and Y495 each contribute to the serotonin site. The helical transmembrane segment at 495 to 516 (YATGPAVLTVALIEAVVVSWFY) threads the bilayer. Residues 517–538 (GITQFCSDVKEMLGFSPGWFWR) are Cytoplasmic-facing. Residues 539 to 558 (ICWVAISPLFLLFIICSFLM) form a helical membrane-spanning segment. Residues F556 and S559 each contribute to the serotonin site. The Extracellular portion of the chain corresponds to 559-574 (SPPQLRLFQYNYPHWS). The helical transmembrane segment at 575–595 (IILGYCIGTSSVICIPIYIIY) threads the bilayer. The Cytoplasmic portion of the chain corresponds to 596–630 (RLISTPGTLKERIIKSITPETPTEIPCGDIRMNAV). Positions 616–624 (TPTEIPCGD) are interaction with RAB4A.

It belongs to the sodium:neurotransmitter symporter (SNF) (TC 2.A.22) family. SLC6A4 subfamily. Monomer or homooligomer. Interacts (via C-terminus) with SCAMP2; the interaction is direct and retains transporter molecules intracellularly. Interacts with filamentous actin and STX1A. Interacts (via the N-terminus) with STX1A (via the H3 domain); this interaction regulates SLC4A6 channel conductance. Interacts with SEC23A, SEC24C and PATJ. Interacts with NOS1; the interaction may diminish the cell surface localization of SERT in the brain and, correspondingly, reduce serotonin reuptake. Interacts with TGFB1I1. Interacts with ITGAV:ITGB3. Interacts (via C-terminus) with ITGB3; this interaction regulates SLC6A4 trafficking. Phosphorylation at Thr-276 increases 5-HT uptake and is required for cGMP-mediated SERT regulation. As to expression, expressed in the lung, midbrain and brainstem regions. Expressed in brainstem raphe neurons.

Its subcellular location is the cell membrane. The protein localises to the endomembrane system. The protein resides in the endosome membrane. It is found in the synapse. It localises to the cell junction. Its subcellular location is the focal adhesion. The protein localises to the cell projection. The protein resides in the neuron projection. It carries out the reaction serotonin(out) + K(+)(in) + Na(+)(out) + H(+)(in) = serotonin(in) + K(+)(out) + Na(+)(in) + H(+)(out). Serotonin transporter that cotransports serotonin with one Na(+) ion in exchange for one K(+) ion and possibly one proton in an overall electroneutral transport cycle. Transports serotonin across the plasma membrane from the extracellular compartment to the cytosol thus limiting serotonin intercellular signaling. Essential for serotonin homeostasis in the central nervous system. In the developing somatosensory cortex, acts in glutamatergic neurons to control serotonin uptake and its trophic functions accounting for proper spatial organization of cortical neurons and elaboration of sensory circuits. In the mature cortex, acts primarily in brainstem raphe neurons to mediate serotonin uptake from the synaptic cleft back into the pre-synaptic terminal thus terminating serotonin signaling at the synapse. Modulates mucosal serotonin levels in the gastrointestinal tract through uptake and clearance of serotonin in enterocytes. Required for enteric neurogenesis and gastrointestinal reflexes. Regulates blood serotonin levels by ensuring rapid high affinity uptake of serotonin from plasma to platelets, where it is further stored in dense granules via vesicular monoamine transporters and then released upon stimulation. Mechanistically, the transport cycle starts with an outward-open conformation having Na1(+) and Cl(-) sites occupied. The binding of a second extracellular Na2(+) ion and serotonin substrate leads to structural changes to outward-occluded to inward-occluded to inward-open, where the Na2(+) ion and serotonin are released into the cytosol. Binding of intracellular K(+) ion induces conformational transitions to inward-occluded to outward-open and completes the cycle by releasing K(+) possibly together with a proton bound to Asp-98 into the extracellular compartment. Na1(+) and Cl(-) ions remain bound throughout the transport cycle. Additionally, displays serotonin-induced channel-like conductance for monovalent cations, mainly Na(+) ions. The channel activity is uncoupled from the transport cycle and may contribute to the membrane resting potential or excitability. This chain is Sodium-dependent serotonin transporter, found in Mus musculus (Mouse).